We begin with the raw amino-acid sequence, 741 residues long: uncharacterized protein (741 aa).

Residues 1–17 are compositionally biased toward polar residues; that stretch reads MDSNTNENNSHASSNER. Residues 1 to 50 form a disordered region; the sequence is MDSNTNENNSHASSNERQSSEGHDDYLNRNPNSEATEGEEGTHPTTGTQP. Over residues 18 to 27 the composition is skewed to basic and acidic residues; sequence QSSEGHDDYL. Residues 107–150 form an RING-type 1; degenerate zinc finger; the sequence is CPICYDDMNENDEKQATKMPCGHIFGKNCLQKWLENHCTCPLCR. Polar residues-rich tracts occupy residues 177–193, 252–263, and 277–302; these read GNQGNTAVSQENASNGV, PDSNTSTPTTRS, and NASSRQETTPSDSRPSTLTSLFNAFF. Disordered stretches follow at residues 177 to 214, 238 to 387, 500 to 543, 561 to 619, 638 to 688, and 713 to 741; these read GNQGNTAVSQENASNGVHSDFHPSEELNNANTDGRTGV, SATN…NTNR, QPAV…PGIT, ENRM…TPTH, STPS…PQCQ, and RCQQSTSNSENQMDEEIGECPKCRNEEHK. The span at 316-332 shows a compositional bias: low complexity; sequence TSNLTSNSGSMTNSTST. Polar residues-rich tracts occupy residues 333–344 and 357–386; these read DLPTSNLPSQNA and PPNLLNLPTASPESTSWLPGSQTNIPANTN. 3 stretches are compositionally biased toward polar residues: residues 563–586, 604–619, and 652–661; these read RMNQTRSESSTPAQQSAAGSSINV, ENSSEVAGSRNQTPTH, and SKVSSGTSTP. The RING-type 2; degenerate zinc finger occupies 687–736; the sequence is CQLEDQGICDPNDRFVHFECGHSVHERCQQSTSNSENQMDEEIGECPKCR. The segment covering 731-741 has biased composition (basic and acidic residues); it reads ECPKCRNEEHK.

The protein localises to the nucleus. This is an uncharacterized protein from Schizosaccharomyces pombe (strain 972 / ATCC 24843) (Fission yeast).